Reading from the N-terminus, the 835-residue chain is Ribosome-releasing factor 2, mitochondrial (835 aa).

The N-terminal 50 residues, 1–50, are a transit peptide targeting the mitochondrion; it reads MPWCNTRLRTCGASPKIFLRRVRCPVLLHNWTIGRVSSVSKMILRFLRSY. The region spanning 57-343 is the tr-type G domain; it reads TRVRNIGIIA…AVVDYLPSPA (287 aa). Residues 66–73, 131–135, and 183–186 each bind GTP; these read AHIDAGKT, DTPGH, and NKMD.

It belongs to the TRAFAC class translation factor GTPase superfamily. Classic translation factor GTPase family. EF-G/EF-2 subfamily.

It localises to the mitochondrion. In terms of biological role, mitochondrial GTPase that mediates the disassembly of ribosomes from messenger RNA at the termination of mitochondrial protein biosynthesis. Not involved in the GTP-dependent ribosomal translocation step during translation elongation. This is Ribosome-releasing factor 2, mitochondrial from Eremothecium gossypii (strain ATCC 10895 / CBS 109.51 / FGSC 9923 / NRRL Y-1056) (Yeast).